The following is a 271-amino-acid chain: Aspartate/glutamate leucyltransferase (271 aa).

This sequence belongs to the R-transferase family. Bpt subfamily.

It is found in the cytoplasm. The enzyme catalyses N-terminal L-glutamyl-[protein] + L-leucyl-tRNA(Leu) = N-terminal L-leucyl-L-glutamyl-[protein] + tRNA(Leu) + H(+). The catalysed reaction is N-terminal L-aspartyl-[protein] + L-leucyl-tRNA(Leu) = N-terminal L-leucyl-L-aspartyl-[protein] + tRNA(Leu) + H(+). In terms of biological role, functions in the N-end rule pathway of protein degradation where it conjugates Leu from its aminoacyl-tRNA to the N-termini of proteins containing an N-terminal aspartate or glutamate. In Acinetobacter baumannii (strain SDF), this protein is Aspartate/glutamate leucyltransferase.